A 146-amino-acid polypeptide reads, in one-letter code: METIFDYNQIKQIIPHRQPFLLIDKVVEYEEGQRCVAIKQVSGNEPFFQGHFPEYAVMPGVLITEALAQTGAVAILNSEENKGKIALFAGIDKCRFKRQVVPGDTLTLEVEITKIKGPIGKGNAKATVDGQLACSCELTFAIQDVK.

The active site involves His-51.

It belongs to the thioester dehydratase family. FabZ subfamily.

It is found in the cytoplasm. The catalysed reaction is a (3R)-hydroxyacyl-[ACP] = a (2E)-enoyl-[ACP] + H2O. Involved in unsaturated fatty acids biosynthesis. Catalyzes the dehydration of short chain beta-hydroxyacyl-ACPs and long chain saturated and unsaturated beta-hydroxyacyl-ACPs. This is 3-hydroxyacyl-[acyl-carrier-protein] dehydratase FabZ from Staphylococcus aureus (strain Mu3 / ATCC 700698).